A 369-amino-acid chain; its full sequence is UDP-N-acetylglucosamine--N-acetylmuramyl-(pentapeptide) pyrophosphoryl-undecaprenol N-acetylglucosamine transferase (369 aa).

UDP-N-acetyl-alpha-D-glucosamine-binding positions include 15–17 (TGG), N126, R169, S197, and Q299.

It belongs to the glycosyltransferase 28 family. MurG subfamily.

It is found in the cell inner membrane. It carries out the reaction di-trans,octa-cis-undecaprenyl diphospho-N-acetyl-alpha-D-muramoyl-L-alanyl-D-glutamyl-meso-2,6-diaminopimeloyl-D-alanyl-D-alanine + UDP-N-acetyl-alpha-D-glucosamine = di-trans,octa-cis-undecaprenyl diphospho-[N-acetyl-alpha-D-glucosaminyl-(1-&gt;4)]-N-acetyl-alpha-D-muramoyl-L-alanyl-D-glutamyl-meso-2,6-diaminopimeloyl-D-alanyl-D-alanine + UDP + H(+). It functions in the pathway cell wall biogenesis; peptidoglycan biosynthesis. Functionally, cell wall formation. Catalyzes the transfer of a GlcNAc subunit on undecaprenyl-pyrophosphoryl-MurNAc-pentapeptide (lipid intermediate I) to form undecaprenyl-pyrophosphoryl-MurNAc-(pentapeptide)GlcNAc (lipid intermediate II). In Methylorubrum extorquens (strain PA1) (Methylobacterium extorquens), this protein is UDP-N-acetylglucosamine--N-acetylmuramyl-(pentapeptide) pyrophosphoryl-undecaprenol N-acetylglucosamine transferase.